A 351-amino-acid polypeptide reads, in one-letter code: Putative ABC transporter permease protein MJ0876 (351 aa).

9 helical membrane passes run 4–24 (VGIL…ALYL), 59–79 (LPPI…GLML), 99–119 (VLMV…FEIF), 124–144 (ILVA…IIAL), 152–172 (VIIV…YLIA), 196–216 (GDVI…MFLI), 249–269 (FITG…IIAP), 284–304 (LVPA…ILSL), and 322–342 (PLPI…YLVY).

Belongs to the binding-protein-dependent transport system permease family. FecCD subfamily.

Its subcellular location is the cell membrane. Its function is as follows. Probably part of a binding-protein-dependent transport system. Probably responsible for the translocation of the substrate across the membrane. This chain is Putative ABC transporter permease protein MJ0876, found in Methanocaldococcus jannaschii (strain ATCC 43067 / DSM 2661 / JAL-1 / JCM 10045 / NBRC 100440) (Methanococcus jannaschii).